A 38-amino-acid chain; its full sequence is Photosystem II reaction center protein L (38 aa).

The helical transmembrane segment at 17–37 (SLYWGLLLIFVLAVLFSNYFF) threads the bilayer.

It belongs to the PsbL family. As to quaternary structure, PSII is composed of 1 copy each of membrane proteins PsbA, PsbB, PsbC, PsbD, PsbE, PsbF, PsbH, PsbI, PsbJ, PsbK, PsbL, PsbM, PsbT, PsbX, PsbY, PsbZ, Psb30/Ycf12, at least 3 peripheral proteins of the oxygen-evolving complex and a large number of cofactors. It forms dimeric complexes.

The protein resides in the plastid. The protein localises to the chloroplast thylakoid membrane. Its function is as follows. One of the components of the core complex of photosystem II (PSII). PSII is a light-driven water:plastoquinone oxidoreductase that uses light energy to abstract electrons from H(2)O, generating O(2) and a proton gradient subsequently used for ATP formation. It consists of a core antenna complex that captures photons, and an electron transfer chain that converts photonic excitation into a charge separation. This subunit is found at the monomer-monomer interface and is required for correct PSII assembly and/or dimerization. The polypeptide is Photosystem II reaction center protein L (Gnetum gnemon (Spanish joint-fir)).